The following is a 29-amino-acid chain: Protamine-like protein (29 aa).

The segment at 1-29 is disordered; the sequence is MRSFDQGSTRAPARERCRRQRPEGRSAQR. Residues 12-29 are compositionally biased toward basic and acidic residues; sequence PARERCRRQRPEGRSAQR.

The sequence is that of Protamine-like protein (tpr) from Escherichia coli (strain K12).